The chain runs to 471 residues: Tryptophanase (471 aa).

Lysine 270 carries the N6-(pyridoxal phosphate)lysine modification.

The protein belongs to the beta-eliminating lyase family. Homotetramer. The cofactor is pyridoxal 5'-phosphate.

The catalysed reaction is L-tryptophan + H2O = indole + pyruvate + NH4(+). It functions in the pathway amino-acid degradation; L-tryptophan degradation via pyruvate pathway; indole and pyruvate from L-tryptophan: step 1/1. This is Tryptophanase from Histophilus somni (strain 2336) (Haemophilus somnus).